A 1192-amino-acid polypeptide reads, in one-letter code: Pyruvate carboxylase (1192 aa).

A disordered region spans residues 1 to 23 (MAAPRQPEEAVDDTEFIDDHHDQ). In terms of domain architecture, Biotin carboxylation spans 40–492 (QFQKILVANR…WTTFIDDTPE (453 aa)). ATP-binding residues include Lys-158, Glu-242, and His-277. One can recognise an ATP-grasp domain in the interval 162–359 (RQLAIRCDVP…IVAAQIQIAA (198 aa)). Arg-334 is a catalytic residue. Residues 578–846 (CLIMDTTWRD…DPGLNSAQVR (269 aa)) form the Pyruvate carboxyltransferase domain. Substrate-binding positions include 586–590 (RDAHQ) and Arg-659. Asp-587 is a binding site for a divalent metal cation. A divalent metal cation is bound by residues Lys-755, His-785, and His-787. Lys-755 bears the N6-carboxylysine mark. A substrate-binding site is contributed by Thr-920. A Biotinyl-binding domain is found at 1115–1190 (KAELGDSSQV…DGQDLVCKIV (76 aa)). The residue at position 1156 (Lys-1156) is an N6-biotinyllysine.

The cofactor is biotin. Requires Zn(2+) as cofactor.

The protein localises to the cytoplasm. The enzyme catalyses hydrogencarbonate + pyruvate + ATP = oxaloacetate + ADP + phosphate + H(+). The protein operates within carbohydrate biosynthesis; gluconeogenesis. Its function is as follows. Pyruvate carboxylase catalyzes a 2-step reaction, involving the ATP-dependent carboxylation of the covalently attached biotin in the first step and the transfer of the carboxyl group to pyruvate in the second. The sequence is that of Pyruvate carboxylase (pyc) from Aspergillus niger.